The chain runs to 434 residues: Iron transporter MagA (434 aa).

10 helical membrane passes run 6-26 (PELTYAAIVALAAVLCGGMMT), 31-51 (PAVVGYILAGVVLGPSGFGLV), 56-76 (AVATLAEFGVLMLLFVIGMKL), 86-106 (KTAIFTTVLQIAGSVGTALLL), 113-133 (SLGLAVVLGCAVAVSSTAVVI), 176-196 (LLPADMARVVLSVLFLVLLFW), 269-289 (SVLLMVFFLSIGLLLDFKFIW), 294-314 (TVLTLLAMVTLFKTALNVTAL), 321-341 (WPSAFLAGVALAQIGEFSFLL), and 357-377 (KLVVAVTVLSLVLSPFWLFTM).

It belongs to the monovalent cation:proton antiporter 2 (CPA2) transporter (TC 2.A.37) family.

Its subcellular location is the membrane. Iron transporter, which is required for the synthesis of bacterial magnetic particles (BMPs). Probably involved in the transport of iron from the environment into the cytoplasm across the cell membrane, and then from the cytoplasm into the BMP lipid vesicle across the BMP membrane. The chain is Iron transporter MagA (magA) from Paramagnetospirillum magneticum (strain ATCC 700264 / AMB-1) (Magnetospirillum magneticum).